A 177-amino-acid chain; its full sequence is ATP synthase subunit delta (177 aa).

This sequence belongs to the ATPase delta chain family. As to quaternary structure, F-type ATPases have 2 components, F(1) - the catalytic core - and F(0) - the membrane proton channel. F(1) has five subunits: alpha(3), beta(3), gamma(1), delta(1), epsilon(1). F(0) has three main subunits: a(1), b(2) and c(10-14). The alpha and beta chains form an alternating ring which encloses part of the gamma chain. F(1) is attached to F(0) by a central stalk formed by the gamma and epsilon chains, while a peripheral stalk is formed by the delta and b chains.

The protein resides in the cell inner membrane. F(1)F(0) ATP synthase produces ATP from ADP in the presence of a proton or sodium gradient. F-type ATPases consist of two structural domains, F(1) containing the extramembraneous catalytic core and F(0) containing the membrane proton channel, linked together by a central stalk and a peripheral stalk. During catalysis, ATP synthesis in the catalytic domain of F(1) is coupled via a rotary mechanism of the central stalk subunits to proton translocation. Functionally, this protein is part of the stalk that links CF(0) to CF(1). It either transmits conformational changes from CF(0) to CF(1) or is implicated in proton conduction. In Vibrio alginolyticus, this protein is ATP synthase subunit delta.